A 391-amino-acid polypeptide reads, in one-letter code: Phosphoglycerate kinase (391 aa).

Substrate is bound by residues 21-23, Arg36, 59-62, Arg113, and Arg146; these read DLN and HLGR. ATP is bound by residues Lys197, Glu319, and 345-348; that span reads GGDT.

Belongs to the phosphoglycerate kinase family. Monomer.

It localises to the cytoplasm. The catalysed reaction is (2R)-3-phosphoglycerate + ATP = (2R)-3-phospho-glyceroyl phosphate + ADP. It functions in the pathway carbohydrate degradation; glycolysis; pyruvate from D-glyceraldehyde 3-phosphate: step 2/5. This chain is Phosphoglycerate kinase, found in Shewanella putrefaciens (strain CN-32 / ATCC BAA-453).